The primary structure comprises 206 residues: Small ribosomal subunit protein uS4 (206 aa).

Positions 96-158 constitute an S4 RNA-binding domain; sequence SRLDNVVYRM…AKKQSRIKAA (63 aa).

The protein belongs to the universal ribosomal protein uS4 family. As to quaternary structure, part of the 30S ribosomal subunit. Contacts protein S5. The interaction surface between S4 and S5 is involved in control of translational fidelity.

One of the primary rRNA binding proteins, it binds directly to 16S rRNA where it nucleates assembly of the body of the 30S subunit. Functionally, with S5 and S12 plays an important role in translational accuracy. The sequence is that of Small ribosomal subunit protein uS4 from Wigglesworthia glossinidia brevipalpis.